The sequence spans 160 residues: MAKVDVVERVTEIIAEVGAPLGIELVDLEYKREGRDMVVRVFLEKREGGINLDDCADVSRQLSDILDVEDFMPERYTLEVSSPGICRPLKKVADYERFLGHLIKVKTFEMLADEAGNKRKTFTGKLTGIADGVIGIDLTEGQKARVPLDKVAKANLEFEF.

It belongs to the RimP family.

Its subcellular location is the cytoplasm. In terms of biological role, required for maturation of 30S ribosomal subunits. The chain is Ribosome maturation factor RimP from Citrifermentans bemidjiense (strain ATCC BAA-1014 / DSM 16622 / JCM 12645 / Bem) (Geobacter bemidjiensis).